Consider the following 426-residue polypeptide: UPF0761 membrane protein Nmul_A0452 (426 aa).

6 consecutive transmembrane segments (helical) span residues 48-68 (LLSL…FPAF), 106-126 (LTAI…LTID), 145-165 (LLIY…SLSL), 187-207 (LLRL…YLIV), 217-237 (AIAG…GFAF), and 255-275 (IPIF…GAVI).

The protein belongs to the UPF0761 family.

The protein localises to the cell inner membrane. This is UPF0761 membrane protein Nmul_A0452 from Nitrosospira multiformis (strain ATCC 25196 / NCIMB 11849 / C 71).